Consider the following 408-residue polypeptide: Tryptophan synthase beta chain (408 aa).

Position 97 is an N6-(pyridoxal phosphate)lysine (Lys-97).

The protein belongs to the TrpB family. In terms of assembly, tetramer of two alpha and two beta chains. Pyridoxal 5'-phosphate serves as cofactor.

The catalysed reaction is (1S,2R)-1-C-(indol-3-yl)glycerol 3-phosphate + L-serine = D-glyceraldehyde 3-phosphate + L-tryptophan + H2O. It functions in the pathway amino-acid biosynthesis; L-tryptophan biosynthesis; L-tryptophan from chorismate: step 5/5. Functionally, the beta subunit is responsible for the synthesis of L-tryptophan from indole and L-serine. This Pseudomonas syringae pv. syringae protein is Tryptophan synthase beta chain (trpB).